We begin with the raw amino-acid sequence, 574 residues long: Probable cytochrome c oxidase subunit 1 (574 aa).

A helical membrane pass occupies residues isoleucine 40 to leucine 60. Histidine 86 provides a ligand contact to Fe(II)-heme a. 6 consecutive transmembrane segments (helical) span residues isoleucine 89–leucine 109, leucine 121–isoleucine 141, leucine 170–isoleucine 190, isoleucine 213–glycine 233, leucine 258–valine 278, and isoleucine 290–valine 310. Cu cation contacts are provided by histidine 264 and tyrosine 268. The 1'-histidyl-3'-tyrosine (His-Tyr) cross-link spans histidine 264–tyrosine 268. Residues histidine 313 and histidine 314 each coordinate Cu cation. The next 2 helical transmembrane spans lie at methionine 315–valine 335 and methionine 359–leucine 379. Histidine 397 is a binding site for heme a3. Transmembrane regions (helical) follow at residues phenylalanine 398 to phenylalanine 418, leucine 433 to glycine 453, and valine 476 to phenylalanine 496. Histidine 399 serves as a coordination point for Fe(II)-heme a.

The protein belongs to the heme-copper respiratory oxidase family. In terms of assembly, associates with subunits II, III and IV to form cytochrome c oxidase. Cu(2+) serves as cofactor. Heme is required as a cofactor.

It localises to the cell membrane. It catalyses the reaction 4 Fe(II)-[cytochrome c] + O2 + 8 H(+)(in) = 4 Fe(III)-[cytochrome c] + 2 H2O + 4 H(+)(out). Its pathway is energy metabolism; oxidative phosphorylation. Functionally, cytochrome c oxidase is the component of the respiratory chain that catalyzes the reduction of oxygen to water. Subunits 1-3 form the functional core of the enzyme complex. CO I is the catalytic subunit of the enzyme. Electrons originating in cytochrome c are transferred via the copper A center of subunit 2 and heme A of subunit 1 to the bimetallic center formed by heme A3 and copper B. This Mycobacterium leprae (strain TN) protein is Probable cytochrome c oxidase subunit 1 (ctaD).